The chain runs to 283 residues: MQALYDVPAPAKLNLFLHVTGRRPDGYHLLQSVFMLIDWCDVLHFEVGGNGAVTREDLTSALPADDLVVRAARALQKATGCPQGVHIGVSKHIPAQAGLGGGSSDAASTLLALNRLWKLKLSRQQLHSIALTLGADVPFFLCGASAWVEGIGDIIRPLELEHQLPPAAFAVVKPEAGLDTRMIFSHPSLKRDSSCATISGFAATHYQFGSNDLQPVAQALCPEITQAINWLESKGLQGRMTGSGSAVFAQITHAVDLHDAPAAWHVKVCENLKSHPLADWVFG.

Lys12 is a catalytic residue. Residue 94-104 participates in ATP binding; that stretch reads PAQAGLGGGSS. The active site involves Asp136.

It belongs to the GHMP kinase family. IspE subfamily.

The catalysed reaction is 4-CDP-2-C-methyl-D-erythritol + ATP = 4-CDP-2-C-methyl-D-erythritol 2-phosphate + ADP + H(+). The protein operates within isoprenoid biosynthesis; isopentenyl diphosphate biosynthesis via DXP pathway; isopentenyl diphosphate from 1-deoxy-D-xylulose 5-phosphate: step 3/6. In terms of biological role, catalyzes the phosphorylation of the position 2 hydroxy group of 4-diphosphocytidyl-2C-methyl-D-erythritol. This is 4-diphosphocytidyl-2-C-methyl-D-erythritol kinase from Acidovorax sp. (strain JS42).